The sequence spans 315 residues: L-threo-3-deoxy-hexylosonate aldolase (315 aa).

50–51 (SN) is a binding site for substrate. Residue K174 is the Schiff-base intermediate with substrate of the active site.

The protein belongs to the DapA family.

It catalyses the reaction 2-dehydro-3-deoxy-L-galactonate = L-glyceraldehyde + pyruvate. It participates in carbohydrate acid metabolism. Functionally, mediates the conversion of 2-dehydro-3-deoxy-L-galactonate to pyruvate and L-glyceraldehyde in D-galacturonate catabolic process. The polypeptide is L-threo-3-deoxy-hexylosonate aldolase (lga1) (Hypocrea jecorina (Trichoderma reesei)).